The chain runs to 315 residues: Aspartate carbamoyltransferase catalytic subunit (315 aa).

Arg55 and Thr56 together coordinate carbamoyl phosphate. An L-aspartate-binding site is contributed by Lys83. Residues Arg105, His138, and Gln141 each coordinate carbamoyl phosphate. L-aspartate contacts are provided by Arg171 and Arg225. Carbamoyl phosphate is bound by residues Gly266 and Pro267.

The protein belongs to the aspartate/ornithine carbamoyltransferase superfamily. ATCase family. As to quaternary structure, heterododecamer (2C3:3R2) of six catalytic PyrB chains organized as two trimers (C3), and six regulatory PyrI chains organized as three dimers (R2).

The catalysed reaction is carbamoyl phosphate + L-aspartate = N-carbamoyl-L-aspartate + phosphate + H(+). It participates in pyrimidine metabolism; UMP biosynthesis via de novo pathway; (S)-dihydroorotate from bicarbonate: step 2/3. Functionally, catalyzes the condensation of carbamoyl phosphate and aspartate to form carbamoyl aspartate and inorganic phosphate, the committed step in the de novo pyrimidine nucleotide biosynthesis pathway. The protein is Aspartate carbamoyltransferase catalytic subunit of Mycolicibacterium vanbaalenii (strain DSM 7251 / JCM 13017 / BCRC 16820 / KCTC 9966 / NRRL B-24157 / PYR-1) (Mycobacterium vanbaalenii).